Consider the following 495-residue polypeptide: Probable aminotransferase ACS12 (495 aa).

N6-(pyridoxal phosphate)lysine is present on Lys334.

Belongs to the class-I pyridoxal-phosphate-dependent aminotransferase family. In terms of assembly, homodimer. Pyridoxal 5'-phosphate serves as cofactor. Expressed in roots. Expressed at low level in leaves, stems, flowers and siliques.

Functionally, probable aminotransferase. Does not have 1-aminocyclopropane-1-carboxylate synthase (ACS) activity, suggesting that it is not involved in ethylene biosynthesis. The polypeptide is Probable aminotransferase ACS12 (ACS12) (Arabidopsis thaliana (Mouse-ear cress)).